We begin with the raw amino-acid sequence, 416 residues long: Signal recognition particle receptor FtsY (416 aa).

Residues 1–10 (MFSFFRRKKK) are compositionally biased toward basic residues. The segment at 1–24 (MFSFFRRKKKQETPALEEAQVQET) is disordered. GTP-binding positions include 224 to 231 (GINGAGKT), 304 to 308 (DTAGR), and 368 to 371 (TKLD).

The protein belongs to the GTP-binding SRP family. FtsY subfamily. As to quaternary structure, part of the signal recognition particle protein translocation system, which is composed of SRP and FtsY. SRP is a ribonucleoprotein composed of Ffh and a 4.5S RNA molecule. Mg(2+) serves as cofactor.

Its subcellular location is the cell membrane. It localises to the cytoplasm. It catalyses the reaction GTP + H2O = GDP + phosphate + H(+). Involved in targeting and insertion of nascent membrane proteins into the cytoplasmic membrane. Acts as a receptor for the complex formed by the signal recognition particle (SRP) and the ribosome-nascent chain (RNC). Interaction with SRP-RNC leads to the transfer of the RNC complex to the Sec translocase for insertion into the membrane, the hydrolysis of GTP by both Ffh and FtsY, and the dissociation of the SRP-FtsY complex into the individual components. This Neisseria gonorrhoeae protein is Signal recognition particle receptor FtsY.